The sequence spans 703 residues: Polyribonucleotide nucleotidyltransferase (703 aa).

Asp-484 and Asp-490 together coordinate Mg(2+). Residues 551 to 610 (PTVTTLRVLPEKISVIIGPAGKNIKKIIEETGVKIDLDPTGLVKIYATSKIAAEKAIDMI) enclose the KH domain. One can recognise an S1 motif domain in the interval 620–688 (GEVYLGKVTR…DQGRIKVSLK (69 aa)).

The protein belongs to the polyribonucleotide nucleotidyltransferase family. It depends on Mg(2+) as a cofactor.

It is found in the cytoplasm. The enzyme catalyses RNA(n+1) + phosphate = RNA(n) + a ribonucleoside 5'-diphosphate. In terms of biological role, involved in mRNA degradation. Catalyzes the phosphorolysis of single-stranded polyribonucleotides processively in the 3'- to 5'-direction. In Sulfurihydrogenibium sp. (strain YO3AOP1), this protein is Polyribonucleotide nucleotidyltransferase.